Reading from the N-terminus, the 134-residue chain is Large ribosomal subunit protein eL14y (134 aa).

This sequence belongs to the eukaryotic ribosomal protein eL14 family.

The protein is Large ribosomal subunit protein eL14y (RPL14B) of Arabidopsis thaliana (Mouse-ear cress).